Consider the following 470-residue polypeptide: Siroheme synthase (470 aa).

A precorrin-2 dehydrogenase /sirohydrochlorin ferrochelatase region spans residues Met1 to Val201. Residues Glu22–Ile23 and Cys43–Glu44 each bind NAD(+). The residue at position 128 (Ser128) is a Phosphoserine. A uroporphyrinogen-III C-methyltransferase region spans residues Gly213 to Gly470. Pro222 is a binding site for S-adenosyl-L-methionine. Residue Asp245 is the Proton acceptor of the active site. Catalysis depends on Lys267, which acts as the Proton donor. Residues Gly298–Asp300, Ile303, Thr328–Ala329, Met379, and Gly408 each bind S-adenosyl-L-methionine.

The protein in the N-terminal section; belongs to the precorrin-2 dehydrogenase / sirohydrochlorin ferrochelatase family. In the C-terminal section; belongs to the precorrin methyltransferase family.

It catalyses the reaction uroporphyrinogen III + 2 S-adenosyl-L-methionine = precorrin-2 + 2 S-adenosyl-L-homocysteine + H(+). It carries out the reaction precorrin-2 + NAD(+) = sirohydrochlorin + NADH + 2 H(+). The enzyme catalyses siroheme + 2 H(+) = sirohydrochlorin + Fe(2+). It functions in the pathway cofactor biosynthesis; adenosylcobalamin biosynthesis; precorrin-2 from uroporphyrinogen III: step 1/1. Its pathway is cofactor biosynthesis; adenosylcobalamin biosynthesis; sirohydrochlorin from precorrin-2: step 1/1. The protein operates within porphyrin-containing compound metabolism; siroheme biosynthesis; precorrin-2 from uroporphyrinogen III: step 1/1. It participates in porphyrin-containing compound metabolism; siroheme biosynthesis; siroheme from sirohydrochlorin: step 1/1. It functions in the pathway porphyrin-containing compound metabolism; siroheme biosynthesis; sirohydrochlorin from precorrin-2: step 1/1. In terms of biological role, multifunctional enzyme that catalyzes the SAM-dependent methylations of uroporphyrinogen III at position C-2 and C-7 to form precorrin-2 via precorrin-1. Then it catalyzes the NAD-dependent ring dehydrogenation of precorrin-2 to yield sirohydrochlorin. Finally, it catalyzes the ferrochelation of sirohydrochlorin to yield siroheme. The chain is Siroheme synthase from Yersinia pestis.